The sequence spans 431 residues: MTVKTEAAKGTLTYSRMRGMVAILIAFMKQRRMGLNDFIQKIANNSYACKHPEVQSILKISQPQEPELMNANPSPPPSPSQQINLGPSSNPHAKPSDFHFLKVIGKGSFGKVLLARHKAEEVFYAVKVLQKKAILKKKEEKHIMSERNVLLKNVKHPFLVGLHFSFQTADKLYFVLDYINGGELFYHLQRERCFLEPRARFYAAEIASALGYLHSLNIVYRDLKPENILLDSQGHIVLTDFGLCKENIEHNSTTSTFCGTPEYLAPEVLHKQPYDRTVDWWCLGAVLYEMLYGLPPFYSRNTAEMYDNILNKPLQLKPNITNSARHLLEGLLQKDRMKRLGAKDDFMEIKSHVFFSLINWDDLINKKITPPFNPNVSGPNDLRHFDPEFTEEPVPNSIGKSPDSILVTASVKEAAETFLGFSYAPPTDSFL.

Residues 1-60 (MTVKTEAAKGTLTYSRMRGMVAILIAFMKQRRMGLNDFIQKIANNSYACKHPEVQSILKI) form a necessary for localization to the mitochondria region. The disordered stretch occupies residues 66–92 (PELMNANPSPPPSPSQQINLGPSSNPH). Phosphoserine is present on Ser-74. Residue Ser-78 is modified to Phosphoserine; by MAPK7. A compositionally biased stretch (polar residues) spans 81 to 91 (QQINLGPSSNP). One can recognise a Protein kinase domain in the interval 98–355 (FHFLKVIGKG…FMEIKSHVFF (258 aa)). ATP-binding positions include 104–112 (IGKGSFGKV) and Lys-127. The short motif at 131–141 (KKAILKKKEEK) is the Nuclear localization signal element. Catalysis depends on Asp-222, which acts as the Proton acceptor. Thr-256 is modified (phosphothreonine; by PDPK1). Positions 356-431 (SLINWDDLIN…SYAPPTDSFL (76 aa)) constitute an AGC-kinase C-terminal domain. Position 369 is a phosphothreonine; by PKA (Thr-369). Phosphoserine is present on residues Ser-397, Ser-401, and Ser-422.

This sequence belongs to the protein kinase superfamily. AGC Ser/Thr protein kinase family. As to quaternary structure, homodimer; disulfide-linked. Forms a trimeric complex with FBXW7 and NOTCH1. Interacts with MAPK3/ERK1, MAPK1/ERK2, MAP2K1/MEK1, MAP2K2/MEK2, NEDD4, NEDD4L, MAPT/TAU, MAPK7, CREB1, SLC9A3R2/NHERF2 and KCNJ1/ROMK1. Associates with the mammalian target of rapamycin complex 2 (mTORC2) via an interaction with MAPKAP1/SIN1. In terms of processing, regulated by phosphorylation. Activated by phosphorylation on Ser-422 by mTORC2, transforming it into a substrate for PDPK1 which phosphorylates it on Thr-256. Phosphorylation on Ser-397 and Ser-401 are also essential for its activity. Phosphorylation on Ser-78 by MAPK7 is required for growth factor-induced cell cycle progression. Ubiquitinated by NEDD4L; which promotes proteasomal degradation. Ubiquitinated by SYVN1 at the endoplasmic reticulum; which promotes rapid proteasomal degradation and maintains a high turnover rate in resting cells.

The protein localises to the cytoplasm. It localises to the nucleus. The protein resides in the endoplasmic reticulum membrane. It is found in the cell membrane. Its subcellular location is the mitochondrion. It carries out the reaction L-seryl-[protein] + ATP = O-phospho-L-seryl-[protein] + ADP + H(+). The enzyme catalyses L-threonyl-[protein] + ATP = O-phospho-L-threonyl-[protein] + ADP + H(+). With respect to regulation, two specific sites, one in the kinase domain (Thr-256) and the other in the C-terminal regulatory region (Ser-422), need to be phosphorylated for its full activation. Phosphorylation at Ser-397 and Ser-401 are also essential for its activity. Activated by WNK1, WNK2, WNK3 and WNK4; which promote phosphorylation by mTORC2. Functionally, serine/threonine-protein kinase which is involved in the regulation of a wide variety of ion channels, membrane transporters, cellular enzymes, transcription factors, neuronal excitability, cell growth, proliferation, survival, migration and apoptosis. Plays an important role in cellular stress response. Contributes to regulation of renal Na(+) retention, renal K(+) elimination, salt appetite, gastric acid secretion, intestinal Na(+)/H(+) exchange and nutrient transport, insulin-dependent salt sensitivity of blood pressure, salt sensitivity of peripheral glucose uptake, cardiac repolarization and memory consolidation. Up-regulates Na(+) channels: SCNN1A/ENAC, SCN5A and ASIC1/ACCN2, K(+) channels: KCNJ1/ROMK1, KCNA1-5, KCNQ1-5 and KCNE1, epithelial Ca(2+) channels: TRPV5 and TRPV6, chloride channels: BSND, CLCN2 and CFTR, glutamate transporters: SLC1A3/EAAT1, SLC1A2 /EAAT2, SLC1A1/EAAT3, SLC1A6/EAAT4 and SLC1A7/EAAT5, amino acid transporters: SLC1A5/ASCT2, SLC38A1/SN1 and SLC6A19, creatine transporter: SLC6A8, Na(+)/dicarboxylate cotransporter: SLC13A2/NADC1, Na(+)-dependent phosphate cotransporter: SLC34A2/NAPI-2B, glutamate receptor: GRIK2/GLUR6. Up-regulates carriers: SLC9A3/NHE3, SLC12A1/NKCC2, SLC12A3/NCC, SLC5A3/SMIT, SLC2A1/GLUT1, SLC5A1/SGLT1 and SLC15A2/PEPT2. Regulates enzymes: GSK3A/B, PMM2 and Na(+)/K(+) ATPase, and transcription factors: CTNNB1 and nuclear factor NF-kappa-B. Stimulates sodium transport into epithelial cells by enhancing the stability and expression of SCNN1A/ENAC. This is achieved by phosphorylating the NEDD4L ubiquitin E3 ligase, promoting its interaction with 14-3-3 proteins, thereby preventing it from binding to SCNN1A/ENAC and targeting it for degradation. Regulates store-operated Ca(+2) entry (SOCE) by stimulating ORAI1 and STIM1. Regulates KCNJ1/ROMK1 directly via its phosphorylation or indirectly via increased interaction with SLC9A3R2/NHERF2. Phosphorylates MDM2 and activates MDM2-dependent ubiquitination of p53/TP53. Phosphorylates MAPT/TAU and mediates microtubule depolymerization and neurite formation in hippocampal neurons. Phosphorylates SLC2A4/GLUT4 and up-regulates its activity. Phosphorylates APBB1/FE65 and promotes its localization to the nucleus. Phosphorylates MAPK1/ERK2 and activates it by enhancing its interaction with MAP2K1/MEK1 and MAP2K2/MEK2. Phosphorylates FBXW7 and plays an inhibitory role in the NOTCH1 signaling. Phosphorylates FOXO1 resulting in its relocalization from the nucleus to the cytoplasm. Phosphorylates FOXO3, promoting its exit from the nucleus and interference with FOXO3-dependent transcription. Phosphorylates BRAF and MAP3K3/MEKK3 and inhibits their activity. Phosphorylates SLC9A3/NHE3 in response to dexamethasone, resulting in its activation and increased localization at the cell membrane. Phosphorylates CREB1. Necessary for vascular remodeling during angiogenesis. In Macaca fascicularis (Crab-eating macaque), this protein is Serine/threonine-protein kinase Sgk1 (SGK1).